The following is a 404-amino-acid chain: uncharacterized protein (404 aa).

The next 12 membrane-spanning stretches (helical) occupy residues 3–23 (IIAK…PITE), 43–63 (TTQI…LTLG), 73–93 (PVVL…IFAP), 95–115 (IETL…GSVI), 135–155 (SLSP…GYII), 162–182 (YTFV…CKIL), 216–236 (IIGA…FIFI), 248–268 (KLAF…GYLI), 280–300 (ILGL…ALIL), 309–329 (IAVI…NLLI), 346–366 (TAGS…TFLV), and 377–397 (FALL…YILI).

The protein belongs to the major facilitator superfamily. Bcr/CmlA family.

The protein resides in the cell inner membrane. This is an uncharacterized protein from Rickettsia bellii (strain RML369-C).